A 356-amino-acid chain; its full sequence is Glucose-1-phosphate thymidylyltransferase (356 aa).

Mg(2+)-binding residues include Asp107 and Asp221.

This sequence belongs to the glucose-1-phosphate thymidylyltransferase family. It depends on Mg(2+) as a cofactor.

The enzyme catalyses dTTP + alpha-D-glucose 1-phosphate + H(+) = dTDP-alpha-D-glucose + diphosphate. Its pathway is antibiotic biosynthesis. In terms of biological role, involved in the biosynthesis of the two 2,6-deoxysugars, dTDP-L-oleandrose and dTDP-D-desosamine, attached to the macrolactone ring oleandolide to produce the aglycone antibiotic oleandomycin. Catalyzes the formation of dTDP-glucose from deoxythymidine triphosphate (dTTP) and glucose 1-phosphate. The chain is Glucose-1-phosphate thymidylyltransferase from Streptomyces antibioticus.